The primary structure comprises 121 residues: Phosphoribosyl-ATP pyrophosphatase (121 aa).

It belongs to the PRA-PH family.

It localises to the cytoplasm. It catalyses the reaction 1-(5-phospho-beta-D-ribosyl)-ATP + H2O = 1-(5-phospho-beta-D-ribosyl)-5'-AMP + diphosphate + H(+). It functions in the pathway amino-acid biosynthesis; L-histidine biosynthesis; L-histidine from 5-phospho-alpha-D-ribose 1-diphosphate: step 2/9. The sequence is that of Phosphoribosyl-ATP pyrophosphatase from Burkholderia ambifaria (strain MC40-6).